We begin with the raw amino-acid sequence, 363 residues long: 3-methyl-D-ornithine--L-lysine ligase (363 aa).

ATP is bound at residue Lys10. Position 11–12 (11–12) interacts with L-lysine; sequence LQ. Residues Asp31, 49–50, and 72–73 each bind ATP; these read DV and EN. Residue Glu72 participates in L-lysine binding. ADP-binding positions include Lys104, Lys131, Ser138, and 160–163; that span reads EEYV. Residues 169–171 and Asp225 each bind D-ornithine; that span reads SLE. Residues Glu227, Glu239, and Asp241 each contribute to the Mg(2+) site. Glu239 contacts ADP. D-ornithine-binding positions include 243-248 and Glu302; that span reads RFPSQT. L-lysine contacts are provided by Ser246 and Glu302.

The protein belongs to the PylC family. The cofactor is Mg(2+).

The catalysed reaction is (3R)-3-methyl-D-ornithine + L-lysine + ATP = (3R)-3-methyl-D-ornithyl-N(6)-L-lysine + ADP + phosphate + H(+). Its pathway is amino-acid biosynthesis; L-pyrrolysine biosynthesis. Functionally, is required for the biosynthesis of pyrrolysine. Catalyzes the ATP-dependent ligation between (3R)-3-methyl-D-ornithine and L-lysine, leading to (3R)-3-methyl-D-ornithyl-N6-L-lysine. This Methanosarcina barkeri (strain Fusaro / DSM 804) protein is 3-methyl-D-ornithine--L-lysine ligase.